Consider the following 531-residue polypeptide: CTP synthase (531 aa).

Positions 1 to 265 are amidoligase domain; that stretch reads MAKYIFITGG…DRIITERLNL (265 aa). Ser13 provides a ligand contact to CTP. Ser13 contacts UTP. 14–19 is a binding site for ATP; it reads SLGKGI. Position 54 (Tyr54) interacts with L-glutamine. An ATP-binding site is contributed by Asp71. 2 residues coordinate Mg(2+): Asp71 and Glu139. CTP-binding positions include 146 to 148, 186 to 191, and Lys222; these read DIE and KTKPTQ. Residues 186-191 and Lys222 contribute to the UTP site; that span reads KTKPTQ. A Glutamine amidotransferase type-1 domain is found at 290 to 529; it reads NVALVGKYVE…IRACLEYKRK (240 aa). Gly349 serves as a coordination point for L-glutamine. Catalysis depends on Cys376, which acts as the Nucleophile; for glutamine hydrolysis. L-glutamine contacts are provided by residues 377 to 380, Glu400, and Arg457; that span reads LGMQ. Residues His502 and Glu504 contribute to the active site.

This sequence belongs to the CTP synthase family. In terms of assembly, homotetramer.

The catalysed reaction is UTP + L-glutamine + ATP + H2O = CTP + L-glutamate + ADP + phosphate + 2 H(+). It carries out the reaction L-glutamine + H2O = L-glutamate + NH4(+). The enzyme catalyses UTP + NH4(+) + ATP = CTP + ADP + phosphate + 2 H(+). It functions in the pathway pyrimidine metabolism; CTP biosynthesis via de novo pathway; CTP from UDP: step 2/2. Allosterically activated by GTP, when glutamine is the substrate; GTP has no effect on the reaction when ammonia is the substrate. The allosteric effector GTP functions by stabilizing the protein conformation that binds the tetrahedral intermediate(s) formed during glutamine hydrolysis. Inhibited by the product CTP, via allosteric rather than competitive inhibition. In terms of biological role, catalyzes the ATP-dependent amination of UTP to CTP with either L-glutamine or ammonia as the source of nitrogen. Regulates intracellular CTP levels through interactions with the four ribonucleotide triphosphates. This is CTP synthase from Aquifex aeolicus (strain VF5).